The primary structure comprises 368 residues: Probable replication factor C subunit 5 (368 aa).

69–76 serves as a coordination point for ATP; the sequence is GPPGTGKT.

It belongs to the activator 1 small subunits family. Heteropentamer of various rfc subunits that forms a complex (RFC) with PCNA in the presence of ATP.

The protein resides in the nucleus. Functionally, the elongation of primed DNA templates by DNA polymerase delta and epsilon requires the action of the accessory proteins proliferating cell nuclear antigen (PCNA) and activator 1. In Caenorhabditis elegans, this protein is Probable replication factor C subunit 5.